Reading from the N-terminus, the 131-residue chain is Histone H2A.2 (131 aa).

The segment at 1 to 22 (MSGGKGKAGSSEKASTSRSAKA) is disordered. The residue at position 2 (Ser-2) is an N-acetylserine. Lys-5 and Lys-7 each carry N6-acetyllysine. At Gln-105 the chain carries N5-methylglutamine. Position 128 is a phosphoserine (Ser-128). Residues 128 to 129 (SQ) carry the [ST]-Q motif motif.

The protein belongs to the histone H2A family. In terms of assembly, the nucleosome is a histone octamer containing two molecules each of H2A, H2B, H3 and H4 assembled in one H3-H4 heterotetramer and two H2A-H2B heterodimers. The octamer wraps approximately 147 bp of DNA. In terms of processing, phosphorylated to form H2AS128ph (gamma-H2A) in response to DNA double-strand breaks (DSBs) generated by exogenous genotoxic agents and by stalled replication forks. Phosphorylation is dependent on the DNA damage checkpoint kinases MEC1/ATR and TEL1/ATM, spreads on either side of a detected DSB site and may mark the surrounding chromatin for recruitment of proteins required for DNA damage signaling and repair. Gamma-H2A is removed from the DNA prior to the strand invasion-primer extension step of the repair process and subsequently dephosphorylated. Dephosphorylation is necessary for efficient recovery from the DNA damage checkpoint. Post-translationally, acetylated by ESA1 to form H2AK4ac and H2AK7ac.

The protein localises to the nucleus. It is found in the chromosome. Its function is as follows. Core component of nucleosome which plays a central role in DNA double strand break (DSB) repair. Nucleosomes wrap and compact DNA into chromatin, limiting DNA accessibility to the cellular machineries which require DNA as a template. Histones thereby play a central role in transcription regulation, DNA repair, DNA replication and chromosomal stability. DNA accessibility is regulated via a complex set of post-translational modifications of histones, also called histone code, and nucleosome remodeling. This chain is Histone H2A.2 (HTA2), found in Candida albicans (strain SC5314 / ATCC MYA-2876) (Yeast).